The primary structure comprises 201 residues: Protein ripply1 (201 aa).

Residues 1-29 (MDPAASPAAAPPAAPAAAPAADPAADPAA) are disordered. Over residues 15–29 (PAAAPAADPAADPAA) the composition is skewed to low complexity. The short motif at 57–60 (AYLW) is the WRPW motif element. The ripply homology domain stretch occupies residues 99–134 (HPVRLYWPKSHSFDYLYSAGEILLNNFPVQATINLY). Over residues 136–174 (DSDSADNEEDKEEEEEEEEEEDDEEEEEDEDKDVNENEP) the composition is skewed to acidic residues. The tract at residues 136–201 (DSDSADNEED…SPDPHSACPN (66 aa)) is disordered.

The protein belongs to the ripply family. Expressed in the anterior presomitic mesoderm and somites of stage E9.5 dpc embryos. Also expressed in tongue, diaphragm and intercostal muscles at 16.5 dpc.

It is found in the nucleus. Functionally, plays a role in somitogenesis. Essential for transcriptional repression of the segmental patterning genes, thus terminating the segmentation program in the presomitic mesoderm, and also required for the maintenance of rostrocaudal polarity in somites. The chain is Protein ripply1 from Mus musculus (Mouse).